We begin with the raw amino-acid sequence, 176 residues long: RNA pyrophosphohydrolase (176 aa).

Residues 6–149 (GYRPNVGIVI…KRDVYRRVMK (144 aa)) form the Nudix hydrolase domain. A Nudix box motif is present at residues 38 to 59 (GGINPGESAEQAMYRELFEEVG).

This sequence belongs to the Nudix hydrolase family. RppH subfamily. Requires a divalent metal cation as cofactor.

In terms of biological role, accelerates the degradation of transcripts by removing pyrophosphate from the 5'-end of triphosphorylated RNA, leading to a more labile monophosphorylated state that can stimulate subsequent ribonuclease cleavage. In Shigella boydii serotype 4 (strain Sb227), this protein is RNA pyrophosphohydrolase.